The sequence spans 162 residues: UPF0260 protein Atu0932 (162 aa).

This sequence belongs to the UPF0260 family.

This is UPF0260 protein Atu0932 from Agrobacterium fabrum (strain C58 / ATCC 33970) (Agrobacterium tumefaciens (strain C58)).